A 534-amino-acid chain; its full sequence is SWI/SNF complex component SNF12 homolog (534 aa).

Residues Met1–Gln12 show a composition bias toward polar residues. Disordered stretches follow at residues Met1–Gln33 and Met78–Arg132. Residues Pro94–Leu105 show a composition bias toward low complexity. The SWIB/MDM2 domain maps to Tyr314–Pro391.

It belongs to the SMARCD family. As to quaternary structure, part of a SWI-SNF complex.

It is found in the nucleus. Functionally, involved in transcriptional activation and repression of select genes by chromatin remodeling (alteration of DNA-nucleosome topology). This chain is SWI/SNF complex component SNF12 homolog, found in Arabidopsis thaliana (Mouse-ear cress).